The sequence spans 59 residues: Large ribosomal subunit protein bL32 (59 aa).

A compositionally biased stretch (basic residues) spans 1–15 (MAVPKKKTSKSKRDM). Positions 1 to 26 (MAVPKKKTSKSKRDMRRATWNRKAAA) are disordered.

It belongs to the bacterial ribosomal protein bL32 family.

This is Large ribosomal subunit protein bL32 from Cyanothece sp. (strain PCC 7425 / ATCC 29141).